A 59-amino-acid polypeptide reads, in one-letter code: Large ribosomal subunit protein uL30 (59 aa).

Belongs to the universal ribosomal protein uL30 family. In terms of assembly, part of the 50S ribosomal subunit.

This Desulfatibacillum aliphaticivorans protein is Large ribosomal subunit protein uL30.